Here is a 364-residue protein sequence, read N- to C-terminus: Phosphoserine aminotransferase (364 aa).

Arginine 42 contributes to the L-glutamate binding site. Residues 76 to 77 (GR), tryptophan 102, threonine 156, aspartate 175, and glutamine 198 each bind pyridoxal 5'-phosphate. Lysine 199 carries the post-translational modification N6-(pyridoxal phosphate)lysine. Pyridoxal 5'-phosphate is bound at residue 240–241 (NT).

This sequence belongs to the class-V pyridoxal-phosphate-dependent aminotransferase family. SerC subfamily. Homodimer. Pyridoxal 5'-phosphate serves as cofactor.

The protein localises to the cytoplasm. The catalysed reaction is O-phospho-L-serine + 2-oxoglutarate = 3-phosphooxypyruvate + L-glutamate. The enzyme catalyses 4-(phosphooxy)-L-threonine + 2-oxoglutarate = (R)-3-hydroxy-2-oxo-4-phosphooxybutanoate + L-glutamate. It participates in amino-acid biosynthesis; L-serine biosynthesis; L-serine from 3-phospho-D-glycerate: step 2/3. The protein operates within cofactor biosynthesis; pyridoxine 5'-phosphate biosynthesis; pyridoxine 5'-phosphate from D-erythrose 4-phosphate: step 3/5. In terms of biological role, catalyzes the reversible conversion of 3-phosphohydroxypyruvate to phosphoserine and of 3-hydroxy-2-oxo-4-phosphonooxybutanoate to phosphohydroxythreonine. The chain is Phosphoserine aminotransferase from Shewanella sediminis (strain HAW-EB3).